The sequence spans 353 residues: Photosystem II D2 protein (353 aa).

Thr2 is subject to N-acetylthreonine. Thr2 is modified (phosphothreonine). Residues 41 to 61 (CAYFALGGWFTGTTFVTSWYT) form a helical membrane-spanning segment. His118 provides a ligand contact to chlorophyll a. A helical membrane pass occupies residues 125-141 (GFMLRQFEIARSVQLRP). Residues Gln130 and Asn143 each coordinate pheophytin a. Residues 153–166 (VFVSVFLIYPLGQS) traverse the membrane as a helical segment. Position 198 (His198) interacts with chlorophyll a. Residues 208–228 (AALLCAIHGATVENTLFEDGD) form a helical membrane-spanning segment. A plastoquinone is bound by residues His215 and Phe262. His215 lines the Fe cation pocket. His269 is a binding site for Fe cation. A helical membrane pass occupies residues 279-295 (GLWMSALGVVGLALNLR).

This sequence belongs to the reaction center PufL/M/PsbA/D family. As to quaternary structure, PSII is composed of 1 copy each of membrane proteins PsbA, PsbB, PsbC, PsbD, PsbE, PsbF, PsbH, PsbI, PsbJ, PsbK, PsbL, PsbM, PsbT, PsbX, PsbY, PsbZ, Psb30/Ycf12, at least 3 peripheral proteins of the oxygen-evolving complex and a large number of cofactors. It forms dimeric complexes. The D1/D2 heterodimer binds P680, chlorophylls that are the primary electron donor of PSII, and subsequent electron acceptors. It shares a non-heme iron and each subunit binds pheophytin, quinone, additional chlorophylls, carotenoids and lipids. There is also a Cl(-1) ion associated with D1 and D2, which is required for oxygen evolution. The PSII complex binds additional chlorophylls, carotenoids and specific lipids. is required as a cofactor.

Its subcellular location is the plastid. It localises to the chloroplast thylakoid membrane. It catalyses the reaction 2 a plastoquinone + 4 hnu + 2 H2O = 2 a plastoquinol + O2. Functionally, photosystem II (PSII) is a light-driven water:plastoquinone oxidoreductase that uses light energy to abstract electrons from H(2)O, generating O(2) and a proton gradient subsequently used for ATP formation. It consists of a core antenna complex that captures photons, and an electron transfer chain that converts photonic excitation into a charge separation. The D1/D2 (PsbA/PsbD) reaction center heterodimer binds P680, the primary electron donor of PSII as well as several subsequent electron acceptors. D2 is needed for assembly of a stable PSII complex. This chain is Photosystem II D2 protein, found in Oenothera argillicola (Appalachian evening primrose).